The sequence spans 664 residues: Transketolase 1 (664 aa).

Residue His-26 coordinates substrate. Residues His-66 and Gly-114–Leu-116 each bind thiamine diphosphate. Asp-155 is a Mg(2+) binding site. 2 residues coordinate thiamine diphosphate: Gly-156 and Asn-185. The Mg(2+) site is built by Asn-185 and Ile-187. Positions 260, 357, and 384 each coordinate substrate. His-260 is a thiamine diphosphate binding site. Glu-411 acts as the Proton donor in catalysis. Phe-437 contributes to the thiamine diphosphate binding site. His-461, Asp-469, and Arg-520 together coordinate substrate.

Belongs to the transketolase family. As to quaternary structure, homodimer. The cofactor is Mg(2+). Ca(2+) serves as cofactor. Mn(2+) is required as a cofactor. It depends on Co(2+) as a cofactor. Requires thiamine diphosphate as cofactor.

It catalyses the reaction D-sedoheptulose 7-phosphate + D-glyceraldehyde 3-phosphate = aldehydo-D-ribose 5-phosphate + D-xylulose 5-phosphate. Its function is as follows. Catalyzes the transfer of a two-carbon ketol group from a ketose donor to an aldose acceptor, via a covalent intermediate with the cofactor thiamine pyrophosphate. In Vibrio vulnificus (strain CMCP6), this protein is Transketolase 1 (tkt1).